Consider the following 468-residue polypeptide: Argininosuccinate lyase (468 aa).

This sequence belongs to the lyase 1 family. Argininosuccinate lyase subfamily.

The protein resides in the cytoplasm. It catalyses the reaction 2-(N(omega)-L-arginino)succinate = fumarate + L-arginine. It functions in the pathway amino-acid biosynthesis; L-arginine biosynthesis; L-arginine from L-ornithine and carbamoyl phosphate: step 3/3. In Paraburkholderia phytofirmans (strain DSM 17436 / LMG 22146 / PsJN) (Burkholderia phytofirmans), this protein is Argininosuccinate lyase.